The following is a 454-amino-acid chain: Allantoinase (454 aa).

Zn(2+) is bound by residues histidine 60, histidine 62, lysine 147, histidine 183, histidine 239, and aspartate 312. Lysine 147 bears the N6-carboxylysine mark.

Belongs to the metallo-dependent hydrolases superfamily. Allantoinase family. In terms of assembly, homotetramer. Zn(2+) is required as a cofactor. In terms of processing, carboxylation allows a single lysine to coordinate two zinc ions.

The catalysed reaction is (S)-allantoin + H2O = allantoate + H(+). Its pathway is nitrogen metabolism; (S)-allantoin degradation; allantoate from (S)-allantoin: step 1/1. Catalyzes the conversion of allantoin (5-ureidohydantoin) to allantoic acid by hydrolytic cleavage of the five-member hydantoin ring. The polypeptide is Allantoinase (Rubrobacter xylanophilus (strain DSM 9941 / JCM 11954 / NBRC 16129 / PRD-1)).